The following is a 410-amino-acid chain: Platelet-activating factor acetylhydrolase IB subunit alpha (410 aa).

Residues 1–38 (MVLSQRQRDELNRAIADYLRSNGYEEAYSVFKKEAELD) form a required for self-association and interaction with PAFAH1B2 and PAFAH1B3 region. Residues 1–66 (MVLSQRQRDE…SVIRLQKKVM (66 aa)) are interaction with NDE1. Residues 1-102 (MVLSQRQRDE…EWIPRPPEKY (102 aa)) are interaction with NDEL1. The LisH domain occupies 7 to 39 (QRDELNRAIADYLRSNGYEEAYSVFKKEAELDM). An N6-acetyllysine modification is found at Lys53. Residues 56 to 82 (TSVIRLQKKVMELESKLNEAKEEFTSG) are a coiled coil. The segment at 83 to 410 (GPLGQKRDPK…DQTVKVWECR (328 aa)) is interaction with dynein and dynactin. WD repeat units lie at residues 106–147 (GHRS…RTLK), 148–187 (GHTD…CIRT), 190–229 (GHDH…CVKT), 232–271 (GHRE…CKAE), 274–333 (EHEH…CLMT), 336–377 (GHDN…KTLN), and 378–410 (AHEH…WECR). Ser109 is modified (phosphoserine). Residues 367-409 (YKNKRCMKTLNAHEHFVTSLDFHKTAPYVVTGSVDQTVKVWEC) form an interaction with DCX region. The interval 388-410 (FHKTAPYVVTGSVDQTVKVWECR) is interaction with NDEL1.

The protein belongs to the WD repeat LIS1/nudF family. As to quaternary structure, can self-associate. Component of the cytosolic PAF-AH (I) heterotetrameric enzyme, which is composed of PAFAH1B1 (beta), PAFAH1B2 (alpha2) and PAFAH1B3 (alpha1) subunits. The catalytic activity of the enzyme resides in the alpha1 (PAFAH1B3) and alpha2 (PAFAH1B2) subunits, whereas the beta subunit (PAFAH1B1) has regulatory activity. Trimer formation is not essential for the catalytic activity. Interacts with the catalytic dimer of PAF-AH (I) heterotetrameric enzyme: interacts with PAFAH1B2 homodimer (alpha2/alpha2 homodimer), PAFAH1B3 homodimer (alpha1/alpha1 homodimer) and PAFAH1B2-PAFAH1B3 heterodimer (alpha2/alpha1 heterodimer). Interacts with DCX, dynein, dynactin, IQGAP1, KATNB1, NDE1, NDEL1, NUDC and RSN. Interacts with DISC1, and this interaction is enhanced by NDEL1. Interacts with DAB1 when DAB1 is phosphorylated in response to RELN/reelin signaling. Interacts with INTS13. Interacts with DCDC1.

Its subcellular location is the cytoplasm. The protein localises to the cytoskeleton. It is found in the microtubule organizing center. The protein resides in the centrosome. It localises to the spindle. Its subcellular location is the nucleus membrane. Functionally, regulatory subunit (beta subunit) of the cytosolic type I platelet-activating factor (PAF) acetylhydrolase (PAF-AH (I)), an enzyme that catalyzes the hydrolyze of the acetyl group at the sn-2 position of PAF and its analogs and participates in PAF inactivation. Regulates the PAF-AH (I) activity in a catalytic dimer composition-dependent manner. Positively regulates the activity of the minus-end directed microtubule motor protein dynein. May enhance dynein-mediated microtubule sliding by targeting dynein to the microtubule plus end. Required for several dynein- and microtubule-dependent processes such as the maintenance of Golgi integrity, the peripheral transport of microtubule fragments and the coupling of the nucleus and centrosome. Required during brain development for the proliferation of neuronal precursors and the migration of newly formed neurons from the ventricular/subventricular zone toward the cortical plate. Neuronal migration involves a process called nucleokinesis, whereby migrating cells extend an anterior process into which the nucleus subsequently translocates. During nucleokinesis dynein at the nuclear surface may translocate the nucleus towards the centrosome by exerting force on centrosomal microtubules. Also required for proper activation of Rho GTPases and actin polymerization at the leading edge of locomoting cerebellar neurons and postmigratory hippocampal neurons in response to calcium influx triggered via NMDA receptors. May also play a role in other forms of cell locomotion including the migration of fibroblasts during wound healing. Required for dynein recruitment to microtubule plus ends and BICD2-bound cargos. May modulate the Reelin pathway through interaction of the PAF-AH (I) catalytic dimer with VLDLR. The sequence is that of Platelet-activating factor acetylhydrolase IB subunit alpha from Sus scrofa (Pig).